The chain runs to 290 residues: Signal peptidase I (290 aa).

Topologically, residues 1–13 (MKFLRSVYAFCSS) are cytoplasmic. Residues 14–34 (WVGTIVIVLLVIFFIAQAFII) traverse the membrane as a helical segment. Residues 35-290 (PSRSMVGTLY…KIIKKENATH (256 aa)) lie on the Extracellular side of the membrane. Active-site residues include Ser38 and Lys106.

Belongs to the peptidase S26 family.

The protein localises to the cell membrane. The catalysed reaction is Cleavage of hydrophobic, N-terminal signal or leader sequences from secreted and periplasmic proteins.. This chain is Signal peptidase I (lepB), found in Helicobacter pylori (strain ATCC 700392 / 26695) (Campylobacter pylori).